Reading from the N-terminus, the 62-residue chain is MTLIFQLTLFAFVGLSFLLVVGVPVVFASPNGWTENKQVVFSGIGFWFLLVFAVGILNSFVI.

Transmembrane regions (helical) follow at residues 8 to 28 and 41 to 61; these read TLFA…VVFA and FSGI…NSFV.

It belongs to the PsbZ family. As to quaternary structure, PSII is composed of 1 copy each of membrane proteins PsbA, PsbB, PsbC, PsbD, PsbE, PsbF, PsbH, PsbI, PsbJ, PsbK, PsbL, PsbM, PsbT, PsbY, PsbZ, Psb30/Ycf12, at least 3 peripheral proteins of the oxygen-evolving complex and a large number of cofactors. It forms dimeric complexes.

Its subcellular location is the plastid. It localises to the chloroplast thylakoid membrane. In terms of biological role, may control the interaction of photosystem II (PSII) cores with the light-harvesting antenna, regulates electron flow through the 2 photosystem reaction centers. PSII is a light-driven water plastoquinone oxidoreductase, using light energy to abstract electrons from H(2)O, generating a proton gradient subsequently used for ATP formation. The polypeptide is Photosystem II reaction center protein Z (Tupiella akineta (Green alga)).